The following is a 503-amino-acid chain: Putative aldehyde dehydrogenase-like protein C9E9.09c (503 aa).

An NAD(+)-binding site is contributed by 247–252 (GSTGVG). Serine 248 bears the Phosphoserine mark. Glutamate 270 functions as the Proton acceptor in the catalytic mechanism. Cysteine 304 functions as the Nucleophile in the catalytic mechanism. Serine 501 carries the post-translational modification Phosphoserine.

Belongs to the aldehyde dehydrogenase family.

This is Putative aldehyde dehydrogenase-like protein C9E9.09c from Schizosaccharomyces pombe (strain 972 / ATCC 24843) (Fission yeast).